We begin with the raw amino-acid sequence, 208 residues long: MPMHPMEKRLHQALFLQSAQRLDQCPPDEGREVAFAGRSNAGKSSAINRLTGQRSLARTSKTPGRTQLLNFFQLDEERRLVDLPGYGYAKVSKSKRNEWQEHLDHYLSERQALVGLVLMMDIRHPLKDFDLMMLEWSAQANMPIHILMTKADKLKFGAAKSTLLQVQKQLKEHPAPLSLQLFSATNGTGCDEAWDKLGEWLGIERLTP.

One can recognise an EngB-type G domain in the interval 29–203; the sequence is EGREVAFAGR…WDKLGEWLGI (175 aa). Residues 37 to 44, 64 to 68, 82 to 85, 149 to 152, and 182 to 184 contribute to the GTP site; these read GRSNAGKS, GRTQL, DLPG, TKAD, and FSA. Mg(2+)-binding residues include Ser-44 and Thr-66.

It belongs to the TRAFAC class TrmE-Era-EngA-EngB-Septin-like GTPase superfamily. EngB GTPase family. Mg(2+) serves as cofactor.

In terms of biological role, necessary for normal cell division and for the maintenance of normal septation. This chain is Probable GTP-binding protein EngB, found in Alcanivorax borkumensis (strain ATCC 700651 / DSM 11573 / NCIMB 13689 / SK2).